We begin with the raw amino-acid sequence, 360 residues long: SPRY domain-containing SOCS box protein 3 (360 aa).

The interval D21–L54 is disordered. The B30.2/SPRY domain maps to S84 to R274. The region spanning S264–W315 is the SOCS box domain. Residues N322 to D350 are disordered. Residues S332–T346 show a composition bias toward polar residues.

It belongs to the SPSB family. In terms of assembly, substrate-recognition component of the ECS(SPSB3) complex, composed of spsb3, cul5, elob, elob and rnf7/rbx2.

Its subcellular location is the nucleus. Its pathway is protein modification; protein ubiquitination. Substrate-recognition component of a cullin-5-RING E3 ubiquitin-protein ligase complex (ECS complex, also named CRL5 complex), which mediates the ubiquitination and subsequent proteasomal degradation of target proteins. This Xenopus laevis (African clawed frog) protein is SPRY domain-containing SOCS box protein 3 (spsb3).